The sequence spans 1171 residues: ATP-dependent helicase/deoxyribonuclease subunit B (1171 aa).

The 301-residue stretch at 1 to 301 (MSLRFVIGRA…AHLEMHYEAR (301 aa)) folds into the UvrD-like helicase ATP-binding domain. Residue 8–15 (GRAGSGKS) participates in ATP binding. The UvrD-like helicase C-terminal domain maps to 281 to 587 (MKQPRFHSQA…QFANIPPSLD (307 aa)). Residues C805, C1129, C1132, and C1138 each coordinate [4Fe-4S] cluster.

This sequence belongs to the helicase family. AddB/RexB type 1 subfamily. Heterodimer of AddA and AddB. Mg(2+) is required as a cofactor. Requires [4Fe-4S] cluster as cofactor.

The heterodimer acts as both an ATP-dependent DNA helicase and an ATP-dependent, dual-direction single-stranded exonuclease. Recognizes the chi site generating a DNA molecule suitable for the initiation of homologous recombination. The AddB subunit has 5' -&gt; 3' nuclease activity but not helicase activity. The sequence is that of ATP-dependent helicase/deoxyribonuclease subunit B from Bacillus mycoides (strain KBAB4) (Bacillus weihenstephanensis).